The following is a 95-amino-acid chain: Co-chaperonin GroES (95 aa).

The protein belongs to the GroES chaperonin family. In terms of assembly, heptamer of 7 subunits arranged in a ring. Interacts with the chaperonin GroEL.

The protein resides in the cytoplasm. Together with the chaperonin GroEL, plays an essential role in assisting protein folding. The GroEL-GroES system forms a nano-cage that allows encapsulation of the non-native substrate proteins and provides a physical environment optimized to promote and accelerate protein folding. GroES binds to the apical surface of the GroEL ring, thereby capping the opening of the GroEL channel. The chain is Co-chaperonin GroES from Xanthomonas axonopodis pv. citri (strain 306).